A 373-amino-acid polypeptide reads, in one-letter code: Dimethylallyltryptophan synthase CymD (373 aa).

Residues aspartate 55, valine 56, and glutamate 64 each coordinate L-tryptophan. Catalysis depends on glutamate 64, which acts as the Nucleophile. The dimethylallyl diphosphate site is built by glutamine 77, lysine 146, tryptophan 148, arginine 205, and lysine 207. Position 211 (arginine 211) interacts with L-tryptophan. Residue tyrosine 274 coordinates dimethylallyl diphosphate. L-tryptophan is bound at residue tyrosine 326. The dimethylallyl diphosphate site is built by arginine 337, lysine 339, and tyrosine 341. Positions 346 to 373 (MHDVTPPPLGVSQQHHLSGQTTARGRTE) constitute a FtsK domain.

Dimethylallyltryptophan synthase; part of the gene cluster that mediates the biosynthesis of cyclic heptapeptides, known as cyclomarins and also of cyclic dipeptides, called cyclomarazines, which have both antimicrobial and cytotoxic effects. Catalyzes the reverse N-prenylation of monomeric L-tryptophan with dimethylallyl diphosphate (DMAPP) to form N-(1,1-dimethylallyl)-tryptophan (r-N-DMAT). The formation of r-N-DMAT appears to proceed via the deprotonation of the indole nitrogen of tryptophan, which facilitates a nucleophilic attack on the carbocation that is forming on the dimethylallyl group as the diphosphate dissociates. The N-(1,1-dimethylallyl)-tryptophan produced by CymD is combined with a range of standard and nonproteinogenic amino acid substrates to synthesize the peptides, a process that is probably catalyzed by the non-canonical nonribosomal peptide synthetase (NRPS), CymA. Other proteins in the cluster catalyze further modifications of the peptides including CymV which catalyzes the oxidation of olefinic cyclomarins and cyclomarazines to their respective epoxide derivatives. Utilizes only DMAPP as the prenyl donor and has no requirement for divalent cations. In Salinispora arenicola (strain CNS-205), this protein is Dimethylallyltryptophan synthase CymD.